A 27-amino-acid chain; its full sequence is Vasotocin-neurophysin VT (27 aa).

An intrachain disulfide couples Cys-1 to Cys-6. A Glycine amide modification is found at Gly-9.

Belongs to the vasopressin/oxytocin family.

In terms of biological role, vasotocin is an antidiuretic hormone. In Sclerophrys regularis (Common African toad), this protein is Vasotocin-neurophysin VT.